Reading from the N-terminus, the 418-residue chain is MENIRTLAEVDPEIARVLREETQRQEEGLELIASENFVSPAVMEAVGSVLTNKYAEGYPGKRYYGGCEVVDVAENLAIARAKDLFGADAVNVQAHSGSQANMGAFMALMKPGDTMLSLDLNSGGHLTHGATFNFSGKLYKVVHYGLTRDTETIDFAQVESLAKEHKPKVIVVGASAYPRTLDFAKFREIADAVGAAMLVDMAHIAGLVAAGVHPSPVPVADIVTSTTHKTLRGPRGGLVLSREPYAKAINSQIFPGIQGGPLMHVIAGKAVAFKEALSPEFKAYQRQIVANAKALAEALQRAGLRLTSGGTDNHLMLVDLRPKKLTGKVAEEVLDKAGITVNKNMIPFDPEKPMTTSGVRVGTPAITTRGMREAEMAVVGRLIGEALDAAQDDAALARIKGQVKELSQGFPLYASRLK.

(6S)-5,6,7,8-tetrahydrofolate-binding positions include leucine 120 and 124 to 126; that span reads GHL. An N6-(pyridoxal phosphate)lysine modification is found at lysine 229.

This sequence belongs to the SHMT family. In terms of assembly, homodimer. It depends on pyridoxal 5'-phosphate as a cofactor.

The protein resides in the cytoplasm. It catalyses the reaction (6R)-5,10-methylene-5,6,7,8-tetrahydrofolate + glycine + H2O = (6S)-5,6,7,8-tetrahydrofolate + L-serine. It participates in one-carbon metabolism; tetrahydrofolate interconversion. It functions in the pathway amino-acid biosynthesis; glycine biosynthesis; glycine from L-serine: step 1/1. In terms of biological role, catalyzes the reversible interconversion of serine and glycine with tetrahydrofolate (THF) serving as the one-carbon carrier. This reaction serves as the major source of one-carbon groups required for the biosynthesis of purines, thymidylate, methionine, and other important biomolecules. Also exhibits THF-independent aldolase activity toward beta-hydroxyamino acids, producing glycine and aldehydes, via a retro-aldol mechanism. The chain is Serine hydroxymethyltransferase from Myxococcus xanthus (strain DK1622).